The sequence spans 221 residues: MSQIDIYNIQNEKVGTLDIKDEIFNIDPNMDVLYRYVDMQLTNKRAGTASTKTRSEVSGGGRKPWPQKHTGRARAGSIRSPLFRHGGVTFGPKPREFHKDLNKKMKRLALKSALSVRYRENNLIVLDEVKFEKPRTKDVKNILSKFGMEDTKVLFLFPYHQEQYENFKLSARNLPKVKVIIADNPGQNKKNVDGLNVFDLINSEKIVLTKEMVNKIEEVIG.

The tract at residues 46-74 is disordered; the sequence is AGTASTKTRSEVSGGGRKPWPQKHTGRAR.

Belongs to the universal ribosomal protein uL4 family. Part of the 50S ribosomal subunit.

Its function is as follows. One of the primary rRNA binding proteins, this protein initially binds near the 5'-end of the 23S rRNA. It is important during the early stages of 50S assembly. It makes multiple contacts with different domains of the 23S rRNA in the assembled 50S subunit and ribosome. In terms of biological role, forms part of the polypeptide exit tunnel. This is Large ribosomal subunit protein uL4 from Petrotoga mobilis (strain DSM 10674 / SJ95).